A 391-amino-acid chain; its full sequence is MTNNTKTITLNLGPQHPATHGVLRLILEMDGEVVNNAVPHIGLLHRGTEKLIEHKTYLQAIPYFDRLDYVSPMCQEHAFALAVESLLECEVPRRAQFIRVLFSELTRILNHTLNIGSQALDIGATTPLLWLFEEREKIMEFYEHVSGSRMHSNYFRPGGVAADLPEGLLEDIDKFIEQFPPKLHDIESLLNENRLWKQRLVDIGVASQKEAMDWGFSGPMLRGSGIAWDLRKSNPYDVYDEMDFKVPIGKNGDCYDRYFVRMLEMYESIKIIKQCIEKMPKGAVKTDDPKLTPPTRAKMKESMEAMIHHFKLYTEGYDVPAGETYKAVEAPKGEFGVYLYSQGGNRPYRCRIKAPGFAHLQGLDFMSKGHLMADVITIIATLDIVFGEIDR.

This sequence belongs to the complex I 49 kDa subunit family. In terms of assembly, NDH-1 is composed of 14 different subunits. Subunits NuoB, C, D, E, F, and G constitute the peripheral sector of the complex.

The protein localises to the cell inner membrane. It catalyses the reaction a quinone + NADH + 5 H(+)(in) = a quinol + NAD(+) + 4 H(+)(out). Functionally, NDH-1 shuttles electrons from NADH, via FMN and iron-sulfur (Fe-S) centers, to quinones in the respiratory chain. The immediate electron acceptor for the enzyme in this species is believed to be ubiquinone. Couples the redox reaction to proton translocation (for every two electrons transferred, four hydrogen ions are translocated across the cytoplasmic membrane), and thus conserves the redox energy in a proton gradient. The protein is NADH-quinone oxidoreductase subunit D of Rickettsia massiliae (strain Mtu5).